The primary structure comprises 797 residues: Discoidin domain-containing receptor tyrosine kinase B (797 aa).

A signal peptide spans 1–19 (MKLLLYLFGVTFHSNTVVA). Residues 20-384 (LELRECSHQL…VTEHDDGTSM (365 aa)) are Extracellular-facing. The F5/8 type C domain occupies 25-181 (CSHQLGMSNR…VCMRVEVFGC (157 aa)). Cysteine 25 and cysteine 181 are disulfide-bonded. A disordered region spans residues 46-66 (SFDLQSTGPQHARAHQESGSG). Residues asparagine 141, asparagine 167, asparagine 264, and asparagine 353 are each glycosylated (N-linked (GlcNAc...) asparagine). The chain crosses the membrane as a helical span at residues 385–405 (FAFIIFFFMFLIVAVIILTVL). The Cytoplasmic segment spans residues 406–797 (YRKREYRVKA…LVHTSPHIHF (392 aa)). Residues 527-785 (LICVSRIGQG…PSFENVHLHL (259 aa)) enclose the Protein kinase domain. Residues 533–541 (IGQGEFGEV) and lysine 554 each bind ATP. The active-site Proton acceptor is the aspartate 645.

This sequence belongs to the protein kinase superfamily. Tyr protein kinase family. Insulin receptor subfamily. Interacts with shc-1. Autophosphorylated on tyrosine residues. In terms of processing, N-glycosylation at Asn-141 is required for axon regeneration after injury but is dispensable for kinase activity and axon localization. Expressed in some neurons in head and tail, some motoneurons in ventral nerve cord, in PVP interneurons, seam cells, rectal gland cells, vulva cells and some non-neuronal cells in the tail. Expressed in D-type motor neurons.

The protein resides in the cell membrane. Its subcellular location is the cell projection. The protein localises to the axon. It is found in the perikaryon. It catalyses the reaction L-tyrosyl-[protein] + ATP = O-phospho-L-tyrosyl-[protein] + ADP + H(+). Its function is as follows. Tyrosine-protein kinase receptor which, together with ddr-1, is involved in axon guidance to establish the tracts for the ventral and dorsal nerve cords during nervous system development. Acts upstream of the adapter shc-1, and the tyrosine kinase receptors svh-1 and svh-2 to regulate axon regeneration following injury in D-type motor neurons. May mediate axon regeneration in association with the collagen emb-9. The protein is Discoidin domain-containing receptor tyrosine kinase B of Caenorhabditis elegans.